The following is a 341-amino-acid chain: tRNA N6-adenosine threonylcarbamoyltransferase (341 aa).

Residues histidine 115 and histidine 119 each coordinate Fe cation. Substrate is bound by residues 137-141 (AVSGG), aspartate 170, glycine 183, aspartate 187, and asparagine 276. Aspartate 306 is a Fe cation binding site.

This sequence belongs to the KAE1 / TsaD family. Fe(2+) serves as cofactor.

Its subcellular location is the cytoplasm. The enzyme catalyses L-threonylcarbamoyladenylate + adenosine(37) in tRNA = N(6)-L-threonylcarbamoyladenosine(37) in tRNA + AMP + H(+). Its function is as follows. Required for the formation of a threonylcarbamoyl group on adenosine at position 37 (t(6)A37) in tRNAs that read codons beginning with adenine. Is involved in the transfer of the threonylcarbamoyl moiety of threonylcarbamoyl-AMP (TC-AMP) to the N6 group of A37, together with TsaE and TsaB. TsaD likely plays a direct catalytic role in this reaction. The chain is tRNA N6-adenosine threonylcarbamoyltransferase from Lacticaseibacillus casei (strain BL23) (Lactobacillus casei).